The chain runs to 222 residues: 7-cyano-7-deazaguanine synthase (222 aa).

11–21 (LSGGMDSAVLL) is a binding site for ATP. Zn(2+)-binding residues include C192, C200, C203, and C206.

This sequence belongs to the QueC family. Zn(2+) is required as a cofactor.

The catalysed reaction is 7-carboxy-7-deazaguanine + NH4(+) + ATP = 7-cyano-7-deazaguanine + ADP + phosphate + H2O + H(+). It participates in purine metabolism; 7-cyano-7-deazaguanine biosynthesis. Its function is as follows. Catalyzes the ATP-dependent conversion of 7-carboxy-7-deazaguanine (CDG) to 7-cyano-7-deazaguanine (preQ(0)). This is 7-cyano-7-deazaguanine synthase from Sulfurihydrogenibium sp. (strain YO3AOP1).